A 296-amino-acid polypeptide reads, in one-letter code: Phosphoribosylaminoimidazole-succinocarboxamide synthase (296 aa).

Belongs to the SAICAR synthetase family.

The catalysed reaction is 5-amino-1-(5-phospho-D-ribosyl)imidazole-4-carboxylate + L-aspartate + ATP = (2S)-2-[5-amino-1-(5-phospho-beta-D-ribosyl)imidazole-4-carboxamido]succinate + ADP + phosphate + 2 H(+). It functions in the pathway purine metabolism; IMP biosynthesis via de novo pathway; 5-amino-1-(5-phospho-D-ribosyl)imidazole-4-carboxamide from 5-amino-1-(5-phospho-D-ribosyl)imidazole-4-carboxylate: step 1/2. This Geobacter metallireducens (strain ATCC 53774 / DSM 7210 / GS-15) protein is Phosphoribosylaminoimidazole-succinocarboxamide synthase.